A 623-amino-acid polypeptide reads, in one-letter code: MNPIKEVKLEFAKILSERLSIDQNKIYENFEYPPKEQMGDVSLPLPTVTKNKELLNISDFPSGGKLIREIKKAGIYINGVINESELFKLIFTNFPEDYGIEKIQKPQRVVVEHTSANPIHPLHVGHLRNAILGDVIARMLKARGHEVNTRFYVNDAGRQVAILTLGYLLLGEPNPPRDEKIDQWIGVIYAITNILIEINQLKKELSSSNEEEYRQKISKLDELISLAGKHREKYPEIFDKLADEISKIENIEEKIQNIIKNYERHSDEKIVNVIRKLVNWTLEGFKDSLKILDIHFDNFDYESDLLWSKRVDEIVKLALSSKNIKEHKGTIALSLDLDPEARKRLNIPLGLELPPLVLVRSDGTTLYTTRDIAYSLYKFEVFYANKVINVIAEQQSVPQMQLRASLYLLGFKDIAENLIHYSYGMVNLQGMRMSGRLGRYISLDEIINEVKEVAENKIKEKGGDLNNLLDIVNSAIRYAILSVSANKPVSFNIKNIVDFDQNSGPYLQYTYARAYNILAKNEEKLDINKVDFSDIVDDKRRLLISIAKFPEVATKAVDELRPEDLLGFMRSIADIFNRWYNFERVLQEPNEGKRMLRLFIVKGVERILYNGLSIVGIKPLKRM.

Positions 116 to 126 match the 'HIGH' region motif; the sequence is ANPIHPLHVGH.

This sequence belongs to the class-I aminoacyl-tRNA synthetase family.

It is found in the cytoplasm. It catalyses the reaction tRNA(Arg) + L-arginine + ATP = L-arginyl-tRNA(Arg) + AMP + diphosphate. The polypeptide is Arginine--tRNA ligase (Sulfurisphaera tokodaii (strain DSM 16993 / JCM 10545 / NBRC 100140 / 7) (Sulfolobus tokodaii)).